A 966-amino-acid polypeptide reads, in one-letter code: Dynamin-like GTPase OPA1, mitochondrial (966 aa).

Residues M1 to T86 constitute a mitochondrion transit peptide. Topologically, residues F87–R95 are mitochondrial matrix. The helical transmembrane segment at L96–Y112 threads the bilayer. The Mitochondrial intermembrane portion of the chain corresponds to T113–D776. A disordered region spans residues E189 to D217. Residues S207–D217 show a composition bias toward basic and acidic residues. Residues K213–K259 are a coiled coil. One can recognise a Dynamin-type G domain in the interval Q291–E567. The interval G301–T308 is G1 motif. Residues S304, G306, K307, T308, S309, and G323 each coordinate GTP. T308 contributes to the Mg(2+) binding site. The interval M327–R330 is G2 motif. Residues T329 and D404 each coordinate Mg(2+). A G3 motif region spans residues D404–G407. The tract at residues T473–D476 is G4 motif. Residues K474, D476, and T509 each contribute to the GTP site. Residues V507–G510 form a G5 motif region. Stalk region stretches follow at residues D595–T842 and C880–I934. The tract at residues T742–C862 is paddle region. An intramembrane segment occupies W777–R787. At T788–K966 the chain is on the mitochondrial intermembrane side. A disulfide bond links C862 and C880. A coiled-coil region spans residues R901–K966.

The protein belongs to the TRAFAC class dynamin-like GTPase superfamily. Dynamin/Fzo/YdjA family. Oligomeric complex consisting of membrane-bound and soluble forms of OPA1. Post-translationally, cleaved by OMA1 or YME1L downstream of the transmembrane region in response to different signals to generate soluble forms. Cleaved by OMA1 at position S1 following stress conditions, generating the short soluble form (Dynamin-like GTPase OPA1, short form; S-OPA1).

The protein localises to the mitochondrion inner membrane. Its subcellular location is the mitochondrion intermembrane space. It carries out the reaction GTP + H2O = GDP + phosphate + H(+). Dynamin-related GTPase that is essential for normal mitochondrial morphology by mediating fusion of the mitochondrial inner membranes, regulating cristae morphology and maintaining respiratory chain function. Exists in two forms: the transmembrane, long form (Dynamin-like GTPase OPA1, long form; L-OPA1), which is tethered to the inner mitochondrial membrane, and the short soluble form (Dynamin-like GTPase OPA1, short form; S-OPA1), which results from proteolytic cleavage and localizes in the intermembrane space. Both forms (L-OPA1 and S-OPA1) cooperate to catalyze the fusion of the mitochondrial inner membrane. The equilibrium between L-OPA1 and S-OPA1 is essential: excess levels of S-OPA1, produced by cleavage by OMA1 following loss of mitochondrial membrane potential, lead to an impaired equilibrium between L-OPA1 and S-OPA1, inhibiting mitochondrial fusion. The balance between L-OPA1 and S-OPA1 also influences cristae shape and morphology. Its role in mitochondrial morphology is required for mitochondrial genome maintenance. Functionally, constitutes the transmembrane long form (L-OPA1) that plays a central role in mitochondrial inner membrane fusion and cristae morphology. L-OPA1 and the soluble short form (S-OPA1) form higher-order helical assemblies that coordinate the fusion of mitochondrial inner membranes. Inner membrane-anchored L-OPA1 molecules initiate membrane remodeling by recruiting soluble S-OPA1 to rapidly polymerize into a flexible cylindrical scaffold encaging the mitochondrial inner membrane. Once at the membrane surface, the formation of S-OPA1 helices induce bilayer curvature. OPA1 dimerization through the paddle region, which inserts into cardiolipin-containing membrane, promotes GTP hydrolysis and the helical assembly of a flexible OPA1 lattice on the membrane, which drives membrane curvature and mitochondrial fusion. Plays a role in the maintenance and remodeling of mitochondrial cristae, some invaginations of the mitochondrial inner membrane that provide an increase in the surface area. Probably acts by forming helical filaments at the inside of inner membrane tubes with the shape and dimensions of crista junctions. In terms of biological role, constitutes the soluble short form (S-OPA1) generated by cleavage by OMA1, which plays a central role in mitochondrial inner membrane fusion and cristae morphology. The transmembrane long form (L-OPA1) and the S-OPA1 form higher-order helical assemblies that coordinate the fusion of mitochondrial inner membranes. Inner membrane-anchored L-OPA1 molecules initiate membrane remodeling by recruiting soluble S-OPA1 to rapidly polymerize into a flexible cylindrical scaffold encaging the mitochondrial inner membrane. Once at the membrane surface, the formation of S-OPA1 helices induce bilayer curvature. OPA1 dimerization through the paddle region, which inserts into cardiolipin-containing membrane, promotes GTP hydrolysis and the helical assembly of a flexible OPA1 lattice on the membrane, which drives membrane curvature and mitochondrial fusion. Excess levels of S-OPA1 produced by cleavage by OMA1 following stress conditions that induce loss of mitochondrial membrane potential, lead to an impaired equilibrium between L-OPA1 and S-OPA1, thereby inhibiting mitochondrial fusion. Plays a role in the maintenance and remodeling of mitochondrial cristae, some invaginations of the mitochondrial inner membrane that provide an increase in the surface area. Probably acts by forming helical filaments at the inside of inner membrane tubes with the shape and dimensions of crista junctions. This Danio rerio (Zebrafish) protein is Dynamin-like GTPase OPA1, mitochondrial.